Reading from the N-terminus, the 89-residue chain is Small ribosomal subunit protein uS15 (89 aa).

The protein belongs to the universal ribosomal protein uS15 family. In terms of assembly, part of the 30S ribosomal subunit. Forms a bridge to the 50S subunit in the 70S ribosome, contacting the 23S rRNA.

Its function is as follows. One of the primary rRNA binding proteins, it binds directly to 16S rRNA where it helps nucleate assembly of the platform of the 30S subunit by binding and bridging several RNA helices of the 16S rRNA. In terms of biological role, forms an intersubunit bridge (bridge B4) with the 23S rRNA of the 50S subunit in the ribosome. The sequence is that of Small ribosomal subunit protein uS15 from Oenococcus oeni (strain ATCC BAA-331 / PSU-1).